The following is a 227-amino-acid chain: MMKEIPGPPTEAQIEDGRLLFAGECEFFFGSQKIDQLPPVGRPEVAFAGRSNVGKSSIINALTGRRALARASSEPGRTKQLNFFNLADRLSLVDMPGYGFAKAAKSVKEDWQDMMFAYLRGRTTLERVILLLDARIELKASDKDVMELLDRAAVVFQIVLTKCDQVKPKALAAKIAEVEALALKHAAAYPRIIATSSETGFGIEDLRAEIARFAVPLQTSGEGQSGS.

The 176-residue stretch at 41-216 (GRPEVAFAGR…RAEIARFAVP (176 aa)) folds into the EngB-type G domain. GTP is bound by residues 49–56 (GRSNVGKS), 76–80 (GRTKQ), 94–97 (DMPG), 161–164 (TKCD), and 195–197 (TSS). Mg(2+) contacts are provided by Ser56 and Thr78.

The protein belongs to the TRAFAC class TrmE-Era-EngA-EngB-Septin-like GTPase superfamily. EngB GTPase family. The cofactor is Mg(2+).

Functionally, necessary for normal cell division and for the maintenance of normal septation. The sequence is that of Probable GTP-binding protein EngB from Gluconobacter oxydans (strain 621H) (Gluconobacter suboxydans).